An 89-amino-acid polypeptide reads, in one-letter code: Putative regulatory protein PCC8801_0196 (89 aa).

Belongs to the RemA family.

This Rippkaea orientalis (strain PCC 8801 / RF-1) (Cyanothece sp. (strain PCC 8801)) protein is Putative regulatory protein PCC8801_0196.